The following is a 346-amino-acid chain: Annexin A1 (346 aa).

N-acetylalanine is present on A2. S5 bears the Phosphoserine; by TRPM7 mark. Residue Q19 forms an Isoglutamyl lysine isopeptide (Gln-Lys) (interchain with K-?) linkage. A Phosphotyrosine; by EGFR modification is found at Y21. S27 is subject to Phosphoserine; by PKC. Phosphoserine occurs at positions 34 and 37. T41 is modified (phosphothreonine). 4 Annexin repeats span residues 42–113 (FNPS…ALLK), 114–185 (TPAQ…SLAK), 197–269 (DLAD…AIVK), and 273–344 (SKPA…ALCG). N6-acetyllysine is present on K58. Positions 59, 60, 62, 97, 100, 105, 127, 129, 131, 132, and 134 each coordinate Ca(2+). T136 is modified (phosphothreonine). D171, G210, and R213 together coordinate Ca(2+). Residue K214 forms a Glycyl lysine isopeptide (Lys-Gly) (interchain with G-Cter in SUMO1); alternate linkage. K214 participates in a covalent cross-link: Glycyl lysine isopeptide (Lys-Gly) (interchain with G-Cter in SUMO2); alternate. G215 contributes to the Ca(2+) binding site. K239 bears the N6-acetyllysine mark. Ca(2+) is bound by residues D253, E255, and L256. A Glycyl lysine isopeptide (Lys-Gly) (interchain with G-Cter in SUMO1) cross-link involves residue K257. The Ca(2+) site is built by E261, M286, G288, and G290. N6-acetyllysine is present on K312. The cysteines at positions 324 and 343 are disulfide-linked. 3 residues coordinate Ca(2+): L328, E330, and T331. K332 is covalently cross-linked (Glycyl lysine isopeptide (Lys-Gly) (interchain with G-Cter in SUMO1)). E336 lines the Ca(2+) pocket.

Belongs to the annexin family. Homodimer; non-covalently linked. Homodimer; linked by transglutamylation. Homodimers linked by transglutamylation are observed in placenta, but not in other tissues. Interacts with S100A11. Heterotetramer, formed by two molecules each of S100A11 and ANXA1. Interacts with DYSF. Interacts with EGFR. Post-translationally, phosphorylated by protein kinase C, EGFR and TRPM7. Phosphorylated in response to EGF treatment. Sumoylated. In terms of processing, proteolytically cleaved by cathepsin CTSG to release the active N-terminal peptide Ac2-26. In terms of tissue distribution, detected in resting neutrophils. Detected in peripheral blood T-cells. Detected in extracellular vesicles in blood serum from patients with inflammatory bowel disease, but not in serum from healthy donors. Detected in placenta (at protein level). Detected in liver.

The protein resides in the nucleus. It is found in the cytoplasm. The protein localises to the cell projection. Its subcellular location is the cilium. It localises to the cell membrane. The protein resides in the membrane. It is found in the endosome membrane. The protein localises to the basolateral cell membrane. Its subcellular location is the apical cell membrane. It localises to the lateral cell membrane. The protein resides in the secreted. It is found in the extracellular space. The protein localises to the extracellular exosome. Its subcellular location is the cytoplasmic vesicle. It localises to the secretory vesicle lumen. The protein resides in the phagocytic cup. It is found in the early endosome. The protein localises to the cytoplasmic vesicle membrane. Plays important roles in the innate immune response as effector of glucocorticoid-mediated responses and regulator of the inflammatory process. Has anti-inflammatory activity. Plays a role in glucocorticoid-mediated down-regulation of the early phase of the inflammatory response. Contributes to the adaptive immune response by enhancing signaling cascades that are triggered by T-cell activation, regulates differentiation and proliferation of activated T-cells. Promotes the differentiation of T-cells into Th1 cells and negatively regulates differentiation into Th2 cells. Has no effect on unstimulated T cells. Negatively regulates hormone exocytosis via activation of the formyl peptide receptors and reorganization of the actin cytoskeleton. Has high affinity for Ca(2+) and can bind up to eight Ca(2+) ions. Displays Ca(2+)-dependent binding to phospholipid membranes. Plays a role in the formation of phagocytic cups and phagosomes. Plays a role in phagocytosis by mediating the Ca(2+)-dependent interaction between phagosomes and the actin cytoskeleton. Its function is as follows. Functions at least in part by activating the formyl peptide receptors and downstream signaling cascades. Promotes chemotaxis of granulocytes and monocytes via activation of the formyl peptide receptors. Promotes rearrangement of the actin cytoskeleton, cell polarization and cell migration. Promotes resolution of inflammation and wound healing. Acts via neutrophil N-formyl peptide receptors to enhance the release of CXCL2. The protein is Annexin A1 (ANXA1) of Homo sapiens (Human).